The primary structure comprises 378 residues: Probable serine/threonine-protein kinase PBL7 (378 aa).

Positions 1–49 (MGWIPCSGKSSGRNKTRRNGDHKLDRKSSDCSVSTSEKSRAKSSLSESK) are disordered. Gly2 carries N-myristoyl glycine lipidation. A compositionally biased stretch (basic and acidic residues) spans 18–29 (RNGDHKLDRKSS). The segment covering 32 to 47 (SVSTSEKSRAKSSLSE) has biased composition (low complexity). Residue Thr62 is modified to Phosphothreonine. A Protein kinase domain is found at 73 to 350 (FRKECLIGEG…ADVVTALSYL (278 aa)). ATP is bound by residues 79–87 (IGEGGFGRV) and Lys102. Tyr147 carries the phosphotyrosine modification. The active-site Proton acceptor is the Asp200. Residues Ser204 and Ser234 each carry the phosphoserine modification. A phosphothreonine mark is found at Thr235 and Thr240. The residue at position 248 (Tyr248) is a Phosphotyrosine.

Belongs to the protein kinase superfamily. Ser/Thr protein kinase family. As to quaternary structure, interacts with BSU1 and BSL1. Post-translationally, phosphorylated at Ser-43, Ser-46 and Ser-234. In terms of tissue distribution, widely expressed.

It localises to the cell membrane. The enzyme catalyses L-seryl-[protein] + ATP = O-phospho-L-seryl-[protein] + ADP + H(+). It carries out the reaction L-threonyl-[protein] + ATP = O-phospho-L-threonyl-[protein] + ADP + H(+). Functionally, serine/threonine-protein kinase involved in the positive regulation of brassinosteroid (BR) signaling and plant growth. Phosphorylates both BSU1 and BSL1 in vitro. The sequence is that of Probable serine/threonine-protein kinase PBL7 from Arabidopsis thaliana (Mouse-ear cress).